The following is a 297-amino-acid chain: ATP synthase subunit a (297 aa).

A run of 8 helical transmembrane segments spans residues 38–58 (PLIPTAHVLSIFMVLFMIAIL), 77–97 (GYVLVVQLLILQFENLTVDLL), 107–127 (LFIIIFVYILISNLMSMVGGI), 133–153 (SSTVTFSLGLMSFFGTFIMGV), 174–194 (TIPLMINPLNVIGYFAPLLSI), 202–222 (VLAGSIFIALLYSLFRTFFTL), 230–250 (VGLVFGTLAGGLVIPAFHVYF), and 252–272 (ILVSAIQAFVFVSLMLTYWSQ).

This sequence belongs to the ATPase A chain family. F-type ATPases have 2 components, CF(1) - the catalytic core - and CF(0) - the membrane proton channel. CF(1) has five subunits: alpha(3), beta(3), gamma(1), delta(1), epsilon(1). CF(0) has three main subunits: a(1), b(2) and c(9-12). The alpha and beta chains form an alternating ring which encloses part of the gamma chain. CF(1) is attached to CF(0) by a central stalk formed by the gamma and epsilon chains, while a peripheral stalk is formed by the delta and b chains.

It localises to the cell membrane. In terms of biological role, key component of the proton channel; it plays a direct role in the translocation of protons across the membrane. The sequence is that of ATP synthase subunit a from Mycoplasmoides gallisepticum (strain R(low / passage 15 / clone 2)) (Mycoplasma gallisepticum).